The chain runs to 449 residues: ATP-dependent protease ATPase subunit HslU (449 aa).

Residues Ile18, Gly60–Glu65, Asp261, Glu327, and Arg399 contribute to the ATP site.

This sequence belongs to the ClpX chaperone family. HslU subfamily. As to quaternary structure, a double ring-shaped homohexamer of HslV is capped on each side by a ring-shaped HslU homohexamer. The assembly of the HslU/HslV complex is dependent on binding of ATP.

The protein resides in the cytoplasm. Its function is as follows. ATPase subunit of a proteasome-like degradation complex; this subunit has chaperone activity. The binding of ATP and its subsequent hydrolysis by HslU are essential for unfolding of protein substrates subsequently hydrolyzed by HslV. HslU recognizes the N-terminal part of its protein substrates and unfolds these before they are guided to HslV for hydrolysis. This chain is ATP-dependent protease ATPase subunit HslU, found in Oleidesulfovibrio alaskensis (strain ATCC BAA-1058 / DSM 17464 / G20) (Desulfovibrio alaskensis).